Consider the following 61-residue polypeptide: Small ribosomal subunit protein uS14 (61 aa).

Residues Cys24, Cys27, Cys40, and Cys43 each contribute to the Zn(2+) site.

Belongs to the universal ribosomal protein uS14 family. Zinc-binding uS14 subfamily. Part of the 30S ribosomal subunit. Contacts proteins S3 and S10. Zn(2+) is required as a cofactor.

Its function is as follows. Binds 16S rRNA, required for the assembly of 30S particles and may also be responsible for determining the conformation of the 16S rRNA at the A site. The chain is Small ribosomal subunit protein uS14 from Thermotoga neapolitana (strain ATCC 49049 / DSM 4359 / NBRC 107923 / NS-E).